Here is a 402-residue protein sequence, read N- to C-terminus: Arginine deiminase (402 aa).

Cys392 functions as the Amidino-cysteine intermediate in the catalytic mechanism.

This sequence belongs to the arginine deiminase family.

Its subcellular location is the cytoplasm. It catalyses the reaction L-arginine + H2O = L-citrulline + NH4(+). The protein operates within amino-acid degradation; L-arginine degradation via ADI pathway; carbamoyl phosphate from L-arginine: step 1/2. This chain is Arginine deiminase, found in Mycobacterium avium (strain 104).